The following is a 292-amino-acid chain: Acetyl-coenzyme A carboxylase carboxyl transferase subunit beta (292 aa).

The region spanning 36–292 (MWSKCEKCAK…LLRMHEVDYE (257 aa)) is the CoA carboxyltransferase N-terminal domain. Zn(2+)-binding residues include C40, C43, C59, and C62. The segment at 40–62 (CEKCAKILYTEDLRENFNVCPNC) adopts a C4-type zinc-finger fold.

This sequence belongs to the AccD/PCCB family. In terms of assembly, acetyl-CoA carboxylase is a heterohexamer composed of biotin carboxyl carrier protein (AccB), biotin carboxylase (AccC) and two subunits each of ACCase subunit alpha (AccA) and ACCase subunit beta (AccD). It depends on Zn(2+) as a cofactor.

It localises to the cytoplasm. It carries out the reaction N(6)-carboxybiotinyl-L-lysyl-[protein] + acetyl-CoA = N(6)-biotinyl-L-lysyl-[protein] + malonyl-CoA. It functions in the pathway lipid metabolism; malonyl-CoA biosynthesis; malonyl-CoA from acetyl-CoA: step 1/1. In terms of biological role, component of the acetyl coenzyme A carboxylase (ACC) complex. Biotin carboxylase (BC) catalyzes the carboxylation of biotin on its carrier protein (BCCP) and then the CO(2) group is transferred by the transcarboxylase to acetyl-CoA to form malonyl-CoA. In Clostridium perfringens (strain ATCC 13124 / DSM 756 / JCM 1290 / NCIMB 6125 / NCTC 8237 / Type A), this protein is Acetyl-coenzyme A carboxylase carboxyl transferase subunit beta.